Consider the following 367-residue polypeptide: Protein TlpB (367 aa).

The next 5 helical transmembrane spans lie at 15–35 (ILIS…SPYF), 53–73 (IIAP…GILI), 83–103 (IIPI…YVTF), 124–144 (IQAI…FFLL), and 153–173 (FYVV…LAPI).

Its subcellular location is the membrane. In Flavobacterium psychrophilum, this protein is Protein TlpB (tlpB).